The chain runs to 864 residues: Microtubule-associated protein TORTIFOLIA1 (864 aa).

Residues 1–26 (MSTPTTSGSAAKPTRPARSSSLATRS) form a disordered region. Residues 17-26 (ARSSSLATRS) are compositionally biased toward polar residues. HEAT repeat units follow at residues 76–113 (ETLPMFLNCLYDSCSDPKPAVKKECLHLLSYVCSLHCD), 117–154 (AHLTKIIAQIVKRLKDSDSGVRDACRDTIGALSGIYLK), 167–204 (LAVGLFVKPLFEAMGEQNKVVQSGASMCMARMVESAAS), 208–245 (TSFQKLCPRICKLLSNSSFLAKASLLPVVSSLSQVGAI), and 248–285 (QSLESLLESIHDCLGSTDWVTRKAAAETLTALASHSSG). The interval 329–353 (DGASDDSKLSASEQLGSEKNGEKRS) is disordered. A Phosphoserine modification is found at Ser-414. Positions 426–504 (NDEEESGLDD…QSEGSFTSNR (79 aa)) are disordered. Polar residues predominate over residues 439 to 448 (MGSSNRLKNT). A compositionally biased stretch (basic and acidic residues) spans 449–459 (QADDKQVKGRF). The span at 489 to 504 (VSNTDNQSEGSFTSNR) shows a compositional bias: polar residues. A coiled-coil region spans residues 508–561 (SAIQRQLLQLERQQTNLMNMLQEFIGGSHDSMVTLEGRVRGLERIVEDMARDLS). The disordered stretch occupies residues 615–670 (DDWFIPPHAASRNGQAGPRRSPRSEQYENEHMGNGRRGWDNKASGTIRFGEGPSAR). Over residues 636–654 (PRSEQYENEHMGNGRRGWD) the composition is skewed to basic and acidic residues.

Interacts with WAV3. As to expression, expressed in roots, hypocotyls, stems, flowers, siliques, inflorescences, petioles, cotyledons, and leaves. Particularly present in root tips and shoot meristems.

It localises to the cytoplasm. Its subcellular location is the cytoskeleton. Its function is as follows. Plant-specific microtubule-associated protein (MAP) that regulates the orientation of cortical microtubules and the direction of organ growth. Determines microtubule organization by modulating microtubule severing. The sequence is that of Microtubule-associated protein TORTIFOLIA1 from Arabidopsis thaliana (Mouse-ear cress).